A 125-amino-acid chain; its full sequence is Late histone H2A.1 (125 aa).

A compositionally biased stretch (basic residues) spans 1–18; that stretch reads MSGRGKGKAKGTKSKTRS. Positions 1 to 21 are disordered; it reads MSGRGKGKAKGTKSKTRSSRA. The residue at position 2 (Ser-2) is an N-acetylserine. Ser-2 carries the phosphoserine modification. Gln-104 carries the post-translational modification N5-methylglutamine. A Glycyl lysine isopeptide (Lys-Gly) (interchain with G-Cter in ubiquitin) cross-link involves residue Lys-119.

This sequence belongs to the histone H2A family. In terms of assembly, the nucleosome is a histone octamer containing two molecules each of H2A, H2B, H3 and H4 assembled in one H3-H4 heterotetramer and two H2A-H2B heterodimers. The octamer wraps approximately 147 bp of DNA. In terms of processing, monoubiquitination of Lys-119 gives a specific tag for epigenetic transcriptional repression. Phosphorylation of Ser-2 directly represses transcription.

It localises to the nucleus. Its subcellular location is the chromosome. Its function is as follows. Core component of nucleosome. Nucleosomes wrap and compact DNA into chromatin, limiting DNA accessibility to the cellular machineries which require DNA as a template. Histones thereby play a central role in transcription regulation, DNA repair, DNA replication and chromosomal stability. DNA accessibility is regulated via a complex set of post-translational modifications of histones, also called histone code, and nucleosome remodeling. The polypeptide is Late histone H2A.1 (Psammechinus miliaris (Green sea urchin)).